Here is a 339-residue protein sequence, read N- to C-terminus: D-erythrose-4-phosphate dehydrogenase (339 aa).

NAD(+) contacts are provided by residues 12 to 13 (RI) and Arg81. Substrate contacts are provided by residues 154–156 (SCT), Arg200, 213–214 (TK), and Arg236. The Nucleophile role is filled by Cys155. Asn318 contributes to the NAD(+) binding site.

This sequence belongs to the glyceraldehyde-3-phosphate dehydrogenase family. Epd subfamily. Homotetramer.

The protein localises to the cytoplasm. It carries out the reaction D-erythrose 4-phosphate + NAD(+) + H2O = 4-phospho-D-erythronate + NADH + 2 H(+). The protein operates within cofactor biosynthesis; pyridoxine 5'-phosphate biosynthesis; pyridoxine 5'-phosphate from D-erythrose 4-phosphate: step 1/5. Functionally, catalyzes the NAD-dependent conversion of D-erythrose 4-phosphate to 4-phosphoerythronate. This Escherichia coli (strain UTI89 / UPEC) protein is D-erythrose-4-phosphate dehydrogenase.